Here is a 488-residue protein sequence, read N- to C-terminus: Dipeptide and tripeptide permease A (488 aa).

The Cytoplasmic portion of the chain corresponds to 1 to 35 (MSTANTPEDEQKPSLNAFKQPRAFYLIFSIELWER). A helical transmembrane segment spans residues 36 to 56 (FGYYGLQGIMAVYLVKMLGMS). Residues 57 to 60 (EAEA) are Periplasmic-facing. Residues 61-81 (ITVFAAFTALVYGFVAIGGWL) form a helical membrane-spanning segment. The Cytoplasmic segment spans residues 82–90 (GDKILGTKR). The chain crosses the membrane as a helical span at residues 91–111 (VIVLGAIVLAIGYAMVAFSDH). The Periplasmic segment spans residues 112-114 (DKD). Residues 115–135 (MIYWGLATIAVGNGLFKANPS) form a helical membrane-spanning segment. The Cytoplasmic portion of the chain corresponds to 136–154 (SLLATCYEKDDPQLDGAFT). A helical transmembrane segment spans residues 155-175 (MYYMSINVGSFLSMLATPWLA). The Periplasmic portion of the chain corresponds to 176–179 (ANYG). Residues 180-200 (WDVAFALSVVGMLITLANFML) form a helical membrane-spanning segment. Over 201–219 (CRGWIKDKGSRPDFEPLNY) the chain is Cytoplasmic. The chain crosses the membrane as a helical span at residues 220–240 (LKLLLTLVGIVALTAVSTWLL). A topological domain (periplasmic) is located at residue H241. A helical transmembrane segment spans residues 242 to 262 (NNEVATWSLAIISLGIILIFA). Residues 263–275 (RETFMMKGVARRK) lie on the Cytoplasmic side of the membrane. A helical transmembrane segment spans residues 276–296 (MIVAFLLMVEAVVFFVLYDQM). Residues 297 to 324 (PTSLNFFAIHNVEHAILGFSVEPEQFQS) are Periplasmic-facing. A helical membrane pass occupies residues 325–345 (LNPFWIMLASPLLAAIYNFMG). Over 346–353 (DKLPMPYK) the chain is Cytoplasmic. Residues 354-374 (FTVGMFLSATAFLVLPLGASM) traverse the membrane as a helical segment. The Periplasmic portion of the chain corresponds to 375–391 (ANEAGIVSSWWLVASYG). A helical membrane pass occupies residues 392–412 (FQSIGELMISGLGLAMVAQLV). Over 413-415 (PQR) the chain is Cytoplasmic. The chain crosses the membrane as a helical span at residues 416–436 (LMGFIMGAWFLTSAAAAIIAG). The Periplasmic portion of the chain corresponds to 437–460 (KVASLMAVPEDVQNAHASLEIYSS). Residues 461-481 (VFLQIGIVTGVIALLMLFTAP) traverse the membrane as a helical segment. The Cytoplasmic segment spans residues 482 to 488 (MLSKMTQ).

Belongs to the major facilitator superfamily. Proton-dependent oligopeptide transporter (POT/PTR) (TC 2.A.17) family. DtpA subfamily.

It localises to the cell inner membrane. In terms of biological role, proton-dependent permease that transports di- and tripeptides. This chain is Dipeptide and tripeptide permease A, found in Proteus mirabilis (strain HI4320).